Reading from the N-terminus, the 662-residue chain is F-box/WD repeat-containing protein pof10 (662 aa).

A compositionally biased stretch (polar residues) spans 1–16 (MKSEPTSLDFTSSNLR). Residues 1–27 (MKSEPTSLDFTSSNLRRMNRDHSSNNT) are disordered. The 47-residue stretch at 28 to 74 (NRTVLNLPKEILIIIFSFLDPRSLLSAQCTCKYWKKLLSDDLSWRTA) folds into the F-box domain. WD repeat units follow at residues 215–260 (SHAD…SLQS), 263–302 (FRSSQILSLCFRPKYKMLLVDTFNYELNSYQLYLIPGYAR), and 429–468 (TAYSNFPITDIYLNEVAMVVGSASGYCGVYDTVTGNFLKK). In terms of domain architecture, UIM 1 spans 581-600 (SEEEIIAYVTMLSQEEEAKR). Positions 617 to 645 (ENDEQATSSLNALSSNHEPPQEQANVAEL) are disordered. Over residues 621-640 (QATSSLNALSSNHEPPQEQA) the composition is skewed to polar residues. A UIM 2 domain is found at 646–662 (NEQEQIELAMRLSLMEM).

In terms of assembly, part of a SCF (SKP1-cullin-F-box) protein ligase complex. Interacts with skp1.

It is found in the cytoplasm. Functionally, probably recognizes and binds to some phosphorylated proteins and promotes their ubiquitination and degradation. The sequence is that of F-box/WD repeat-containing protein pof10 (pof10) from Schizosaccharomyces pombe (strain 972 / ATCC 24843) (Fission yeast).